The chain runs to 937 residues: MSDIKNITKLQIEDKGKKYSLYSLKKLSQELGKDVTRLPYSIRVLLENQLRNIDGYKVKEDDMHKVLDWDAKASSRPEIPHMPARVVMQDFTGVPAVVDLAAMRKAIKDAGGDADKINPLVDTAMVIDHSVQVDFYGTKTALAQNVAKEFERNGERYSLLKWAQKAFDDFIVVPPGMGIIHQVNLEYLAKDALVKNINGEDVIYPDTLVGTDSHTTMINGVGAVGWGVGGIEAEAVMLGQPYYMVLPDVVGVKFTGKLKTGVTATDLVLKVTEVLRKHGVVGKFVEYYGEGLESLSLPDRATIANMTPEYGATIGFFPVDEVTLDFFNNTNRSELVDAAREMYKEQLLFRENPAEEPEYSNIVEIDLSEVESNLAGPKRPQDRVAFHDMKKAFAEALVHEQGLHGFGLTDEQLQKSAEVKGLNERITHGSVAIAAITSCTNTSNPSLLLGAGLLAKKANEKGLKVKPFVKTSLAPGSQVVTQYLEKANLLPELENLGFNLVGYGCTTCIGNSGPLDEPVVEAINEADLIVASVSSGNRNFEGRINPHIKANYLASPIHVVAYALAGTVDFDPVEDAIGKDAEGNDVYLADIWPTTEEIAAIQSHVINSDMFKKAYATVLDGTEEWQKLKAPEGKLYEFDSSSTYIQCPNFFEKFAEGNDDLDIKGARTLLMLGDSVTTDHISPAGAIPEEYPAGQYLKSHGVEKKDFNSYGSRRGNHEVMMRGTFANIRIRNLLLDNVEGGFTKYHLDGSQQYVFDAAMKYKEKGIPLVILAGKEYGTGSSRDWAAKGTFLLGVKAVIAESYERIHRSNLVGMGVLPLEYVNGQNAKTLGLDGTEMFNIKNLNNIKPRQIVIVEAVHPKTAHTTTFEALARLDADVDVDYLKNGGILQTVLKDIMGDKKESKSTQSTTSKGCGSADTSSETSCPFAKIANFFKKLFK.

Residues C439, C505, and C508 each contribute to the [4Fe-4S] cluster site. A disordered region spans residues 898 to 921 (KKESKSTQSTTSKGCGSADTSSET).

Belongs to the aconitase/IPM isomerase family. In terms of assembly, monomer. Requires [4Fe-4S] cluster as cofactor.

The catalysed reaction is citrate = D-threo-isocitrate. The enzyme catalyses (2S,3R)-3-hydroxybutane-1,2,3-tricarboxylate = 2-methyl-cis-aconitate + H2O. It functions in the pathway carbohydrate metabolism; tricarboxylic acid cycle; isocitrate from oxaloacetate: step 2/2. Its pathway is organic acid metabolism; propanoate degradation. Functionally, involved in the catabolism of short chain fatty acids (SCFA) via the tricarboxylic acid (TCA)(acetyl degradation route) and probably the 2-methylcitrate cycle I (propionate degradation route). Catalyzes the reversible isomerization of citrate to isocitrate via cis-aconitate. Could catalyze the hydration of 2-methyl-cis-aconitate to yield (2R,3S)-2-methylisocitrate. The apo form of AcnA functions as a RNA-binding regulatory protein. The protein is Aconitate hydratase A (acn) of Francisella tularensis subsp. holarctica (strain LVS).